A 542-amino-acid chain; its full sequence is CTP synthase (542 aa).

The amidoligase domain stretch occupies residues 1 to 265; that stretch reads MTRYIFVTGG…DDFVVERFGL (265 aa). Position 13 (S13) interacts with CTP. S13 serves as a coordination point for UTP. ATP-binding positions include 14–19 and D71; that span reads SLGKGI. Residues D71 and E139 each contribute to the Mg(2+) site. Residues 146-148, 186-191, and K222 each bind CTP; these read DIE and KTKPTQ. Residues 186–191 and K222 each bind UTP; that span reads KTKPTQ. A Glutamine amidotransferase type-1 domain is found at 290-541; it reads TIAMVGKYME…VKAALAQKNK (252 aa). G351 serves as a coordination point for L-glutamine. Residue C378 is the Nucleophile; for glutamine hydrolysis of the active site. L-glutamine is bound by residues 379 to 382, E402, and R469; that span reads LGMQ. Catalysis depends on residues H514 and E516.

It belongs to the CTP synthase family. As to quaternary structure, homotetramer.

It carries out the reaction UTP + L-glutamine + ATP + H2O = CTP + L-glutamate + ADP + phosphate + 2 H(+). The enzyme catalyses L-glutamine + H2O = L-glutamate + NH4(+). It catalyses the reaction UTP + NH4(+) + ATP = CTP + ADP + phosphate + 2 H(+). Its pathway is pyrimidine metabolism; CTP biosynthesis via de novo pathway; CTP from UDP: step 2/2. Allosterically activated by GTP, when glutamine is the substrate; GTP has no effect on the reaction when ammonia is the substrate. The allosteric effector GTP functions by stabilizing the protein conformation that binds the tetrahedral intermediate(s) formed during glutamine hydrolysis. Inhibited by the product CTP, via allosteric rather than competitive inhibition. Functionally, catalyzes the ATP-dependent amination of UTP to CTP with either L-glutamine or ammonia as the source of nitrogen. Regulates intracellular CTP levels through interactions with the four ribonucleotide triphosphates. This is CTP synthase from Pseudomonas putida (strain GB-1).